The primary structure comprises 435 residues: Serine--tRNA ligase (435 aa).

T242–E244 is an L-serine binding site. Residue R273–E275 participates in ATP binding. E296 contributes to the L-serine binding site. E360–S363 lines the ATP pocket. S396 lines the L-serine pocket.

Belongs to the class-II aminoacyl-tRNA synthetase family. Type-1 seryl-tRNA synthetase subfamily. Homodimer. The tRNA molecule binds across the dimer.

The protein localises to the cytoplasm. It carries out the reaction tRNA(Ser) + L-serine + ATP = L-seryl-tRNA(Ser) + AMP + diphosphate + H(+). The enzyme catalyses tRNA(Sec) + L-serine + ATP = L-seryl-tRNA(Sec) + AMP + diphosphate + H(+). Its pathway is aminoacyl-tRNA biosynthesis; selenocysteinyl-tRNA(Sec) biosynthesis; L-seryl-tRNA(Sec) from L-serine and tRNA(Sec): step 1/1. Catalyzes the attachment of serine to tRNA(Ser). Is also able to aminoacylate tRNA(Sec) with serine, to form the misacylated tRNA L-seryl-tRNA(Sec), which will be further converted into selenocysteinyl-tRNA(Sec). The sequence is that of Serine--tRNA ligase from Vibrio vulnificus (strain CMCP6).